We begin with the raw amino-acid sequence, 160 residues long: Cytosolic iron-sulfur assembly component 2A (160 aa).

Zn(2+)-binding residues include H89, H123, E150, and E153.

This sequence belongs to the MIP18 family. Monomer and homodimer. Component of the CIA complex. Interacts with CIAO1. Interacts with IREB2. Interacts with APAF1. Substantially enriched in macrophages.

It is found in the cytoplasm. In terms of biological role, component of the cytosolic iron-sulfur protein assembly (CIA) complex, a multiprotein complex that mediates the incorporation of iron-sulfur cluster into extramitochondrial Fe/S proteins. As a CIA complex component and in collaboration with CIAO1 specifically matures ACO1 and stabilizes IREB2, connecting cytosolic iron-sulfur protein maturation with cellular iron regulation. May play a role in chromosome segregation through establishment of sister chromatid cohesion. May induce apoptosis in collaboration with APAF1. The protein is Cytosolic iron-sulfur assembly component 2A of Homo sapiens (Human).